Here is a 208-residue protein sequence, read N- to C-terminus: Uracil phosphoribosyltransferase (208 aa).

Residues arginine 78, arginine 103, and 130-138 (DPMLATGGT) each bind 5-phospho-alpha-D-ribose 1-diphosphate. Uracil contacts are provided by residues isoleucine 193 and 198–200 (GDA). Aspartate 199 contributes to the 5-phospho-alpha-D-ribose 1-diphosphate binding site.

It belongs to the UPRTase family. Requires Mg(2+) as cofactor.

It catalyses the reaction UMP + diphosphate = 5-phospho-alpha-D-ribose 1-diphosphate + uracil. It functions in the pathway pyrimidine metabolism; UMP biosynthesis via salvage pathway; UMP from uracil: step 1/1. Allosterically activated by GTP. Functionally, catalyzes the conversion of uracil and 5-phospho-alpha-D-ribose 1-diphosphate (PRPP) to UMP and diphosphate. This Blochmanniella floridana protein is Uracil phosphoribosyltransferase.